Reading from the N-terminus, the 514-residue chain is Putative ribose/galactose/methyl galactoside import ATP-binding protein 3 (514 aa).

2 consecutive ABC transporter domains span residues 21–256 (LRLD…VGRT) and 267–512 (VPTD…SGRS). 53–60 (GENGAGKS) provides a ligand contact to ATP.

This sequence belongs to the ABC transporter superfamily. Carbohydrate importer 2 (CUT2) (TC 3.A.1.2) family.

The protein resides in the cell inner membrane. It carries out the reaction D-ribose(out) + ATP + H2O = D-ribose(in) + ADP + phosphate + H(+). The enzyme catalyses D-galactose(out) + ATP + H2O = D-galactose(in) + ADP + phosphate + H(+). In terms of biological role, part of an ABC transporter complex involved in carbohydrate import. Could be involved in ribose, galactose and/or methyl galactoside import. Responsible for energy coupling to the transport system. This chain is Putative ribose/galactose/methyl galactoside import ATP-binding protein 3, found in Burkholderia cenocepacia (strain HI2424).